A 605-amino-acid polypeptide reads, in one-letter code: Isocitrate dehydrogenase kinase/phosphatase (605 aa).

ATP contacts are provided by residues 353 to 359 (APGFKGT) and K374. D413 is an active-site residue.

Belongs to the AceK family.

The protein resides in the cytoplasm. It catalyses the reaction L-seryl-[isocitrate dehydrogenase] + ATP = O-phospho-L-seryl-[isocitrate dehydrogenase] + ADP + H(+). Bifunctional enzyme which can phosphorylate or dephosphorylate isocitrate dehydrogenase (IDH) on a specific serine residue. This is a regulatory mechanism which enables bacteria to bypass the Krebs cycle via the glyoxylate shunt in response to the source of carbon. When bacteria are grown on glucose, IDH is fully active and unphosphorylated, but when grown on acetate or ethanol, the activity of IDH declines drastically concomitant with its phosphorylation. This Rhodopseudomonas palustris (strain HaA2) protein is Isocitrate dehydrogenase kinase/phosphatase.